A 372-amino-acid chain; its full sequence is Aryl-hydrocarbon-interacting protein-like 1 (372 aa).

Residues 53-145 (RQVDQPMHII…DLDELQKEPQ (93 aa)) enclose the PPIase FKBP-type domain. TPR repeat units lie at residues 178 to 211 (VPVL…LRNL), 230 to 263 (NTLT…HPGI), and 264 to 297 (VKAY…EPSM). Positions 315 to 372 (KQEEERLRCRNMLSQGATQPPTEPPAEPHTAPPAELSTGPPAEPPAELPLSPGHSLQH) are disordered. A compositionally biased stretch (pro residues) spans 335–345 (PTEPPAEPHTA).

Interacts with NUB1.

The protein resides in the cytoplasm. It is found in the nucleus. May be important in protein trafficking and/or protein folding and stabilization. The sequence is that of Aryl-hydrocarbon-interacting protein-like 1 (AIPL1) from Papio cynocephalus (Yellow baboon).